The sequence spans 556 residues: Myb/SANT-like DNA-binding domain-containing protein 2 (556 aa).

Polar residues-rich tracts occupy residues 1–10 (MAASCGSSQL) and 36–45 (GNPSLSDPST). Residues 1–82 (MAASCGSSQL…GGASPSVSFS (82 aa)) are disordered. Gly residues predominate over residues 56-74 (PAAGGAGLGGGGAAGGRGG). Residues 99 to 169 (SWTPAETNAL…QCRERIKTLR (71 aa)) enclose the Myb-like domain. The segment at 431–458 (PRSPLAEPRGADPSNETPGELEVPSPQA) is disordered.

In Gallus gallus (Chicken), this protein is Myb/SANT-like DNA-binding domain-containing protein 2 (MSANTD2).